Consider the following 274-residue polypeptide: Glutamate racemase (274 aa).

Residues 10 to 11 (DS) and 42 to 43 (YG) contribute to the substrate site. The Proton donor/acceptor role is filled by Cys-73. Residue 74–75 (NT) coordinates substrate. Cys-184 functions as the Proton donor/acceptor in the catalytic mechanism. 185–186 (TH) contributes to the substrate binding site.

The protein belongs to the aspartate/glutamate racemases family.

It catalyses the reaction L-glutamate = D-glutamate. It functions in the pathway cell wall biogenesis; peptidoglycan biosynthesis. Provides the (R)-glutamate required for cell wall biosynthesis. This Latilactobacillus sakei subsp. sakei (strain 23K) (Lactobacillus sakei subsp. sakei) protein is Glutamate racemase.